The following is a 921-amino-acid chain: Guanylate kinase-associated protein mars (921 aa).

At Ser-49 the chain carries Phosphoserine. Thr-51 bears the Phosphothreonine mark. Ser-76 and Ser-170 each carry phosphoserine. Position 172 is a phosphotyrosine (Tyr-172). 2 disordered regions span residues Gly-179–Ala-208 and Arg-273–Asn-325. Composition is skewed to low complexity over residues Lys-193–Ala-208 and Arg-273–Pro-285. Ser-444 carries the post-translational modification Phosphoserine. Residues Gln-500–Tyr-531 form a disordered region. Thr-519 is modified (phosphothreonine). A Phosphoserine modification is found at Ser-554. 2 disordered regions span residues Ala-641–Val-660 and Thr-743–Ser-763. 2 positions are modified to phosphoserine: Ser-785 and Ser-792. Disordered regions lie at residues Gln-809–Gln-833 and Glu-861–Met-921. Thr-826 is subject to Phosphothreonine. Over residues Glu-878 to Leu-907 the composition is skewed to polar residues.

It belongs to the SAPAP family. As to expression, expressed in the central nervous system and at different stages of gametogenesis. In embryos, it is expressed in central nervous system and brain. In testis, it is strongly expressed in pre-meiotic germ cells, but is not found in somatic or post-meiotic cells.

It is found in the cell membrane. Its subcellular location is the nucleus. The protein resides in the nucleoplasm. It localises to the cytoplasm. The protein localises to the cytoskeleton. It is found in the spindle. In terms of biological role, cell cycle regulator. This chain is Guanylate kinase-associated protein mars (mars), found in Drosophila melanogaster (Fruit fly).